The sequence spans 97 residues: Anti-sigma-YlaC factor YlaD (97 aa).

Zn(2+) contacts are provided by His29, Cys33, and Cys36. The chain crosses the membrane as a helical span at residues 71–93; sequence YYGLLIMKAACWFGAAVAMMLII.

The protein belongs to the zinc-associated anti-sigma factor (ZAS) superfamily. The cofactor is Zn(2+).

The protein localises to the cell membrane. Functionally, anti-sigma factor for YlaC. This chain is Anti-sigma-YlaC factor YlaD (ylaD), found in Bacillus subtilis (strain 168).